The sequence spans 624 residues: 1-deoxy-D-xylulose-5-phosphate synthase (624 aa).

Thiamine diphosphate is bound by residues His74 and 115-117 (GHS). A Mg(2+)-binding site is contributed by Asp146. Thiamine diphosphate is bound by residues 147-148 (GA), Asn175, Tyr286, and Glu366. Asn175 lines the Mg(2+) pocket.

It belongs to the transketolase family. DXPS subfamily. In terms of assembly, homodimer. The cofactor is Mg(2+). Requires thiamine diphosphate as cofactor.

It catalyses the reaction D-glyceraldehyde 3-phosphate + pyruvate + H(+) = 1-deoxy-D-xylulose 5-phosphate + CO2. It functions in the pathway metabolic intermediate biosynthesis; 1-deoxy-D-xylulose 5-phosphate biosynthesis; 1-deoxy-D-xylulose 5-phosphate from D-glyceraldehyde 3-phosphate and pyruvate: step 1/1. Catalyzes the acyloin condensation reaction between C atoms 2 and 3 of pyruvate and glyceraldehyde 3-phosphate to yield 1-deoxy-D-xylulose-5-phosphate (DXP). This chain is 1-deoxy-D-xylulose-5-phosphate synthase, found in Clostridium kluyveri (strain NBRC 12016).